We begin with the raw amino-acid sequence, 321 residues long: Cytochrome f (321 aa).

The N-terminal stretch at 1-37 (MKIYRQIKQSFSITKIVFSFFISLLLNLVAQPTICQA) is a signal peptide. Heme contacts are provided by Phe-38, Cys-58, Cys-61, and His-62. Residues 287–306 (VQGLIAFFISVVLAQIFLVL) form a helical membrane-spanning segment.

The protein belongs to the cytochrome f family. As to quaternary structure, the 4 large subunits of the cytochrome b6-f complex are cytochrome b6, subunit IV (17 kDa polypeptide, petD), cytochrome f and the Rieske protein, while the 4 small subunits are PetG, PetL, PetM and PetN. The complex functions as a dimer. Heme is required as a cofactor.

The protein resides in the plastid. It localises to the cyanelle thylakoid membrane. Component of the cytochrome b6-f complex, which mediates electron transfer between photosystem II (PSII) and photosystem I (PSI), cyclic electron flow around PSI, and state transitions. In Cyanophora paradoxa, this protein is Cytochrome f (petA).